Reading from the N-terminus, the 269-residue chain is Tryptophan synthase alpha chain (269 aa).

Active-site proton acceptor residues include glutamate 49 and aspartate 60.

Belongs to the TrpA family. In terms of assembly, tetramer of two alpha and two beta chains.

The enzyme catalyses (1S,2R)-1-C-(indol-3-yl)glycerol 3-phosphate + L-serine = D-glyceraldehyde 3-phosphate + L-tryptophan + H2O. The protein operates within amino-acid biosynthesis; L-tryptophan biosynthesis; L-tryptophan from chorismate: step 5/5. In terms of biological role, the alpha subunit is responsible for the aldol cleavage of indoleglycerol phosphate to indole and glyceraldehyde 3-phosphate. This is Tryptophan synthase alpha chain from Pseudomonas entomophila (strain L48).